The sequence spans 487 residues: Calcium-binding tyrosine phosphorylation-regulated protein (487 aa).

One can recognise an RIIa domain in the interval 12-49 (YGLKTLLEGISRAVLKTNPSDINQFAAAYFQELTMYRG). Composition is skewed to basic and acidic residues over residues 78–91 (KKLECLKEPEKTSV) and 101–117 (KSTDTDEDNVTRTEYSD). Disordered regions lie at residues 78–163 (KKLE…AVSP), 243–271 (VDLGSQPKENEAEQSTASSVPLQDEQEPP), and 420–487 (IVSD…ATAE). Low complexity predominate over residues 140 to 152 (SSSKPATPKATTP). Polar residues-rich tracts occupy residues 420-436 (IVSDNTGQEESGENSVP) and 455-464 (SGTSVKSSSG). The segment covering 478 to 487 (IEPEGEATAE) has biased composition (acidic residues).

In terms of assembly, interacts with FSCB. In terms of processing, phosphorylated on tyrosine residues during in vitro capacitation. Dephosphorylation affects its ability to bind calcium.

The protein localises to the cytoplasm. It localises to the cytoskeleton. The protein resides in the cell projection. It is found in the cilium. Its subcellular location is the flagellum. Functionally, may function as a regulator of both motility- and head-associated functions such as capacitation and the acrosome reaction. May bind calcium in vitro. The chain is Calcium-binding tyrosine phosphorylation-regulated protein (CABYR) from Macaca fascicularis (Crab-eating macaque).